The chain runs to 283 residues: Serine protease 57 (283 aa).

The signal sequence occupies residues 1–31; it reads MGLGLRGWGRPLLTVATALMLPVKPPAGSWG. The Peptidase S1 domain maps to 34 to 263; sequence IIGGHEVTPH…FVAWIWDVVR (230 aa). C59 and C75 are disulfide-bonded. Residues H74 and D122 each act as charge relay system in the active site. N-linked (GlcNAc...) asparagine glycosylation is found at N129 and N189. 3 disulfides stabilise this stretch: C157/C224, C188/C202, and C214/C239. The active-site Charge relay system is S218.

This sequence belongs to the peptidase S1 family. After cleavage of the signal peptide, the N-terminus is probably further processed by CTSC. Processing by CTSC is probably required for accumulation in cytoplasmic granules; in the absence of CTSC the protein does not accumulate. In terms of processing, N-glycosylated. In terms of tissue distribution, detected in peripheral blood neutrophil granulocytes, but not in other types of leukocytes. Detected in neutrophils and neutrophil precursors in bone marrow (at protein level). Detected in myeloblasts and promyelocytes in bone marrow.

Its subcellular location is the cytoplasmic granule lumen. It is found in the secreted. Inhibited by SERPINA1, SERPINC1 and SERPING1. Serine protease that cleaves preferentially after Arg residues. Can also cleave after citrulline (deimidated arginine) and methylarginine residues. This chain is Serine protease 57 (PRSS57), found in Homo sapiens (Human).